A 528-amino-acid chain; its full sequence is Na(+)/H(+) antiporter NhaB (528 aa).

Transmembrane regions (helical) follow at residues 25-47, 66-86, 97-117, 130-164, 241-261, 304-324, 351-371, 390-410, 448-468, and 476-496; these read IISFLVINPIVFYFNPFIAGWLL, PGGLLAIEAVAIGMTSPSQVL, LLLVFMVAGIYFMKQLLLFVF, VSLLFCVSSAFLSAFLDALTVIAVIITVAVGFYSI, IRMSPVTVPVFFAGVTTCFLV, AFIGVWLIAGLALHLASVGLI, ALPFTALLAVFFAIVAVIIDL, LVVFYIANGLLSMVSDNVFVG, ATPNGQAAFLFLLTSAIAPLI, and VWMALPYTIVLSIVGVLAIQL.

Belongs to the NhaB Na(+)/H(+) (TC 2.A.34) antiporter family.

The protein localises to the cell inner membrane. The enzyme catalyses 2 Na(+)(in) + 3 H(+)(out) = 2 Na(+)(out) + 3 H(+)(in). Na(+)/H(+) antiporter that extrudes sodium in exchange for external protons. This Shewanella halifaxensis (strain HAW-EB4) protein is Na(+)/H(+) antiporter NhaB.